We begin with the raw amino-acid sequence, 171 residues long: Peptide methionine sulfoxide reductase MsrA (171 aa).

Residue cysteine 13 is part of the active site.

It belongs to the MsrA Met sulfoxide reductase family.

The catalysed reaction is L-methionyl-[protein] + [thioredoxin]-disulfide + H2O = L-methionyl-(S)-S-oxide-[protein] + [thioredoxin]-dithiol. The enzyme catalyses [thioredoxin]-disulfide + L-methionine + H2O = L-methionine (S)-S-oxide + [thioredoxin]-dithiol. Has an important function as a repair enzyme for proteins that have been inactivated by oxidation. Catalyzes the reversible oxidation-reduction of methionine sulfoxide in proteins to methionine. The chain is Peptide methionine sulfoxide reductase MsrA from Mycolicibacterium paratuberculosis (strain ATCC BAA-968 / K-10) (Mycobacterium paratuberculosis).